A 328-amino-acid chain; its full sequence is Fructokinase-2 (328 aa).

It belongs to the carbohydrate kinase PfkB family.

It catalyses the reaction D-fructose + ATP = D-fructose 6-phosphate + ADP + H(+). It functions in the pathway glycan biosynthesis; starch biosynthesis. Functionally, may play an important role in maintaining the flux of carbon towards starch formation. In Solanum habrochaites (Wild tomato), this protein is Fructokinase-2 (FRK2).